The chain runs to 236 residues: Eukaryotic translation initiation factor 3 subunit J (236 aa).

The tract at residues M1–R84 is disordered. Residues G28–K46 are compositionally biased toward acidic residues. Composition is skewed to basic and acidic residues over residues D47 to A58 and A68 to E77.

It belongs to the eIF-3 subunit J family. Component of the eukaryotic translation initiation factor 3 (eIF-3) complex. The eIF-3 complex interacts with pix.

The protein resides in the cytoplasm. Its function is as follows. Component of the eukaryotic translation initiation factor 3 (eIF-3) complex, which is involved in protein synthesis of a specialized repertoire of mRNAs and, together with other initiation factors, stimulates binding of mRNA and methionyl-tRNAi to the 40S ribosome. The eIF-3 complex specifically targets and initiates translation of a subset of mRNAs involved in cell proliferation. The sequence is that of Eukaryotic translation initiation factor 3 subunit J from Drosophila sechellia (Fruit fly).